The sequence spans 359 residues: WD repeat-containing protein 89 homolog (359 aa).

WD repeat units follow at residues 23–62 (IGDD…ILNV), 65–104 (GHKD…CSQT), 106–144 (NQQG…RKFD), 146–186 (SHTE…DDDA), 192–232 (NAED…KIKH), and 294–333 (VHTD…TNIL).

This chain is WD repeat-containing protein 89 homolog (wdr89), found in Dictyostelium discoideum (Social amoeba).